Consider the following 172-residue polypeptide: Translation initiation factor IF-3 (172 aa).

It belongs to the IF-3 family. Monomer.

It is found in the cytoplasm. IF-3 binds to the 30S ribosomal subunit and shifts the equilibrium between 70S ribosomes and their 50S and 30S subunits in favor of the free subunits, thus enhancing the availability of 30S subunits on which protein synthesis initiation begins. The chain is Translation initiation factor IF-3 from Campylobacter fetus subsp. fetus (strain 82-40).